An 800-amino-acid chain; its full sequence is DNA topoisomerase 4 subunit A (800 aa).

Residues 31-495 (LPDVRDGLKP…EIEEIKIDKE (465 aa)) enclose the Topo IIA-type catalytic domain. Tyr-119 serves as the catalytic O-(5'-phospho-DNA)-tyrosine intermediate.

This sequence belongs to the type II topoisomerase GyrA/ParC subunit family. ParC type 2 subfamily. Heterotetramer composed of ParC and ParE.

It localises to the cell membrane. The catalysed reaction is ATP-dependent breakage, passage and rejoining of double-stranded DNA.. In terms of biological role, topoisomerase IV is essential for chromosome segregation. It relaxes supercoiled DNA. Performs the decatenation events required during the replication of a circular DNA molecule. This chain is DNA topoisomerase 4 subunit A, found in Staphylococcus aureus.